Consider the following 200-residue polypeptide: Holliday junction branch migration complex subunit RuvA (200 aa).

The segment at 1 to 64 (MIGQLTGLVG…EDAIQLFGFA (64 aa)) is domain I. Residues 65-143 (TTDERDWFRL…KMPGGGGTVS (79 aa)) form a domain II region. The segment at 144–148 (APGIV) is flexible linker. The interval 149–200 (SGPSVENDALLALAGLGFRRAEAWPVLSKVLAENENATLDLAIRLSLKDLAR) is domain III.

This sequence belongs to the RuvA family. As to quaternary structure, homotetramer. Forms an RuvA(8)-RuvB(12)-Holliday junction (HJ) complex. HJ DNA is sandwiched between 2 RuvA tetramers; dsDNA enters through RuvA and exits via RuvB. An RuvB hexamer assembles on each DNA strand where it exits the tetramer. Each RuvB hexamer is contacted by two RuvA subunits (via domain III) on 2 adjacent RuvB subunits; this complex drives branch migration. In the full resolvosome a probable DNA-RuvA(4)-RuvB(12)-RuvC(2) complex forms which resolves the HJ.

The protein localises to the cytoplasm. The RuvA-RuvB-RuvC complex processes Holliday junction (HJ) DNA during genetic recombination and DNA repair, while the RuvA-RuvB complex plays an important role in the rescue of blocked DNA replication forks via replication fork reversal (RFR). RuvA specifically binds to HJ cruciform DNA, conferring on it an open structure. The RuvB hexamer acts as an ATP-dependent pump, pulling dsDNA into and through the RuvAB complex. HJ branch migration allows RuvC to scan DNA until it finds its consensus sequence, where it cleaves and resolves the cruciform DNA. In Gluconobacter oxydans (strain 621H) (Gluconobacter suboxydans), this protein is Holliday junction branch migration complex subunit RuvA.